A 149-amino-acid polypeptide reads, in one-letter code: Oligosaccharyltransferase complex subunit ostc-A (149 aa).

Residues 1 to 32 are Cytoplasmic-facing; it reads MESLYRVPFTVLECPNLKLKKPSWLHMPSAMT. A helical membrane pass occupies residues 33–53; that stretch reads VYAMVVVSYFLITGGIIYDVI. Topologically, residues 54–83 are extracellular; the sequence is VEPPSVGSMTDEHGHQRPVAFLAYRVNGQY. A helical transmembrane segment spans residues 84–104; that stretch reads IMEGLASSFLFTMGGLGFIIL. At 105–117 the chain is on the cytoplasmic side; that stretch reads DRSNTPNIPKLNR. The helical transmembrane segment at 118–138 threads the bilayer; the sequence is FLLLFIGFVCVLLSFFMARVF. Residues 139–149 lie on the Extracellular side of the membrane; that stretch reads MRMKLPGYLMG.

It belongs to the OSTC family. Specific component of the STT3A-containing form of the oligosaccharyltransferase (OST) complex.

It is found in the membrane. The protein operates within protein modification; protein glycosylation. In terms of biological role, specific component of the STT3A-containing form of the oligosaccharyl transferase (OST) complex that catalyzes the initial transfer of a defined glycan (Glc(3)Man(9)GlcNAc(2) in eukaryotes) from the lipid carrier dolichol-pyrophosphate to an asparagine residue within an Asn-X-Ser/Thr consensus motif in nascent polypeptide chains, the first step in protein N-glycosylation. N-glycosylation occurs cotranslationally and the complex associates with the Sec61 complex at the channel-forming translocon complex that mediates protein translocation across the endoplasmic reticulum (ER). All subunits are required for a maximal enzyme activity. This chain is Oligosaccharyltransferase complex subunit ostc-A, found in Xenopus laevis (African clawed frog).